We begin with the raw amino-acid sequence, 148 residues long: Small ribosomal subunit protein bS16 (148 aa).

The interval 106 to 148 (QAAARAAAGAEDRPATTPKKAKKSGSAEEAEAAPATDAPAAGQ) is disordered. The span at 137–148 (AAPATDAPAAGQ) shows a compositional bias: low complexity.

The protein belongs to the bacterial ribosomal protein bS16 family.

This chain is Small ribosomal subunit protein bS16, found in Frankia casuarinae (strain DSM 45818 / CECT 9043 / HFP020203 / CcI3).